The primary structure comprises 370 residues: Peptide chain release factor 1 (370 aa).

Glutamine 239 is subject to N5-methylglutamine.

Belongs to the prokaryotic/mitochondrial release factor family. In terms of processing, methylated by PrmC. Methylation increases the termination efficiency of RF1.

It localises to the cytoplasm. Peptide chain release factor 1 directs the termination of translation in response to the peptide chain termination codons UAG and UAA. The sequence is that of Peptide chain release factor 1 from Bacteroides fragilis (strain ATCC 25285 / DSM 2151 / CCUG 4856 / JCM 11019 / LMG 10263 / NCTC 9343 / Onslow / VPI 2553 / EN-2).